The sequence spans 706 residues: Probable N(6)-adenosine-methyltransferase MT-A70-like (706 aa).

Disordered stretches follow at residues 64 to 114 (RPFV…VAAA) and 223 to 261 (TLPL…PDMW). Low complexity predominate over residues 103 to 114 (SPGSSPASVAAA). The span at 227-236 (LQPPPAPQMP) shows a compositional bias: pro residues. S-adenosyl-L-methionine contacts are provided by residues 479–480 (DI) and D497. Residues 567 to 580 (RIIRTGRTGHWLNH) form a positively charged region required for RNA-binding region. Residues K614, 637-640 (RMHN), and 650-651 (NQ) contribute to the S-adenosyl-L-methionine site. Residues 669-706 (AYPDSEVQPPSPPRASAPIDGDQGTSQKPTVSDGERPA) are disordered.

This sequence belongs to the MT-A70-like family.

Its subcellular location is the nucleus. The enzyme catalyses an adenosine in mRNA + S-adenosyl-L-methionine = an N(6)-methyladenosine in mRNA + S-adenosyl-L-homocysteine + H(+). Its function is as follows. Probable N6-methyltransferase that methylates adenosine residues of some mRNAs. N6-methyladenosine (m6A), which is present at internal sites of some mRNAs, may play a role in the efficiency of mRNA splicing, transport or translation. This is Probable N(6)-adenosine-methyltransferase MT-A70-like from Oryza sativa subsp. japonica (Rice).